The following is a 361-amino-acid chain: Carbamoyl phosphate synthase small chain (361 aa).

The segment at 1–173 (MRAALALEDG…SVREEYRFSD (173 aa)) is CPSase. L-glutamine contacts are provided by Ser45, Gly225, and Gly227. The Glutamine amidotransferase type-1 domain occupies 177–361 (EIVVIDCGVK…DEFLAMCREH (185 aa)). The active-site Nucleophile is Cys252. L-glutamine-binding residues include Leu253, Gln256, Asn294, Gly296, and Phe297. Catalysis depends on residues His337 and Glu339.

Belongs to the CarA family. In terms of assembly, composed of two chains; the small (or glutamine) chain promotes the hydrolysis of glutamine to ammonia, which is used by the large (or ammonia) chain to synthesize carbamoyl phosphate. Tetramer of heterodimers (alpha,beta)4.

It catalyses the reaction hydrogencarbonate + L-glutamine + 2 ATP + H2O = carbamoyl phosphate + L-glutamate + 2 ADP + phosphate + 2 H(+). It carries out the reaction L-glutamine + H2O = L-glutamate + NH4(+). It functions in the pathway amino-acid biosynthesis; L-arginine biosynthesis; carbamoyl phosphate from bicarbonate: step 1/1. The protein operates within pyrimidine metabolism; UMP biosynthesis via de novo pathway; (S)-dihydroorotate from bicarbonate: step 1/3. In terms of biological role, small subunit of the glutamine-dependent carbamoyl phosphate synthetase (CPSase). CPSase catalyzes the formation of carbamoyl phosphate from the ammonia moiety of glutamine, carbonate, and phosphate donated by ATP, constituting the first step of 2 biosynthetic pathways, one leading to arginine and/or urea and the other to pyrimidine nucleotides. The small subunit (glutamine amidotransferase) binds and cleaves glutamine to supply the large subunit with the substrate ammonia. In Methanopyrus kandleri (strain AV19 / DSM 6324 / JCM 9639 / NBRC 100938), this protein is Carbamoyl phosphate synthase small chain.